Here is a 307-residue protein sequence, read N- to C-terminus: Elongation factor Ts (307 aa).

The segment at 80-83 (TDFV) is involved in Mg(2+) ion dislocation from EF-Tu.

This sequence belongs to the EF-Ts family.

Its subcellular location is the cytoplasm. Associates with the EF-Tu.GDP complex and induces the exchange of GDP to GTP. It remains bound to the aminoacyl-tRNA.EF-Tu.GTP complex up to the GTP hydrolysis stage on the ribosome. The polypeptide is Elongation factor Ts (Clostridium botulinum (strain Loch Maree / Type A3)).